The sequence spans 239 residues: Ribosomal RNA small subunit methyltransferase G (239 aa).

Residues glycine 76, phenylalanine 81, 99–101 (DSS), 128–129 (IE), and arginine 147 each bind S-adenosyl-L-methionine.

This sequence belongs to the methyltransferase superfamily. RNA methyltransferase RsmG family.

It localises to the cytoplasm. Its function is as follows. Specifically methylates the N7 position of a guanine in 16S rRNA. The protein is Ribosomal RNA small subunit methyltransferase G of Prochlorococcus marinus (strain MIT 9515).